Here is a 156-residue protein sequence, read N- to C-terminus: MNLNATILGQAIAFVLFVLFCMKYVWPPIMAAIEKRQKEIADGLSSAERAKKDLELAQSNATDQLKKAKAEAQVIIEQANKRRAQILDEAKAEAEQERNKIVAQAQAEIEAERKRAREELRKQVAILAVAGAEKIIERSVDEAANSDIVNKLVAEL.

Residues 11–31 (AIAFVLFVLFCMKYVWPPIMA) form a helical membrane-spanning segment.

This sequence belongs to the ATPase B chain family. F-type ATPases have 2 components, F(1) - the catalytic core - and F(0) - the membrane proton channel. F(1) has five subunits: alpha(3), beta(3), gamma(1), delta(1), epsilon(1). F(0) has three main subunits: a(1), b(2) and c(10-14). The alpha and beta chains form an alternating ring which encloses part of the gamma chain. F(1) is attached to F(0) by a central stalk formed by the gamma and epsilon chains, while a peripheral stalk is formed by the delta and b chains.

The protein resides in the cell inner membrane. In terms of biological role, f(1)F(0) ATP synthase produces ATP from ADP in the presence of a proton or sodium gradient. F-type ATPases consist of two structural domains, F(1) containing the extramembraneous catalytic core and F(0) containing the membrane proton channel, linked together by a central stalk and a peripheral stalk. During catalysis, ATP synthesis in the catalytic domain of F(1) is coupled via a rotary mechanism of the central stalk subunits to proton translocation. Component of the F(0) channel, it forms part of the peripheral stalk, linking F(1) to F(0). In Cronobacter sakazakii (strain ATCC BAA-894) (Enterobacter sakazakii), this protein is ATP synthase subunit b.